A 279-amino-acid polypeptide reads, in one-letter code: MAVSFNTTLHQPSLSPSCSIKLYSGLKPQSASFLASGYQNLNKEFYGRVYKSLQSGTGKASRSRVKMMPIGTPRVPYRNREEGTWQWVDIWNALYRERVIFIGQNIDEEFSNQILATMLYLDTLDDSRRIYMYLNGPGGDLTPSLAIYDTMKSLKSPVGTHCVGLAYNLAGFLLAAGEKGHRFAMPLSRIALQSPAGAARGQADDIQNEAKELSRIRDYLFNELAKNTGQPAERVFKDLSRVKRFNAEEAIEYGLIDKIVRPPRIKEDAPRQDESAGLG.

Residues 1-54 (MAVSFNTTLHQPSLSPSCSIKLYSGLKPQSASFLASGYQNLNKEFYGRVYKSLQ) constitute a chloroplast transit peptide.

This sequence belongs to the peptidase S14 family. Component of the chloroplastic Clp protease core complex which consist of at least 16 proteins: CLPP4 (3 copies), CLPP5 (3 copies), CLPR4 (2 copies), ClpP1 (1 copy), CLPP6 (1 copy), CLPR2 (1 copy), CLPT1 (1 copy), CLPT2 (1 copy) and 3 copies of CLPP3 and/or CLPR1 and/or CLPR3. The core complex is organized in two heptameric rings, one containing CLPP3,4,5,6 in a 1:2:3:1 ratio and the other CLPP1 and CLPR1,2,3,4 in a 3:1:1:1:1 ratio. Expressed at least in leaves and roots.

Its subcellular location is the plastid. It localises to the chloroplast. Required for chloroplast development and integrity. Involved in the regulation of plastoglobules formation. The chain is ATP-dependent Clp protease proteolytic subunit-related protein 2, chloroplastic from Arabidopsis thaliana (Mouse-ear cress).